The primary structure comprises 1036 residues: Phytosulfokine receptor 2 (1036 aa).

Positions 1-16 (MVIILLLVFFVGSSVS) are cleaved as a signal peptide. Asn36 and Asn45 each carry an N-linked (GlcNAc...) asparagine glycan. 17 LRR repeats span residues 89 to 111 (ELRV…ISKL), 113 to 136 (QLQV…SGLK), 137 to 159 (LIQS…GVFP), 160 to 182 (GLVM…LCSS), 185 to 207 (GIQV…YNCS), 209 to 231 (SIQQ…LYSI), 233 to 256 (ELEQ…SNLS), 257 to 279 (GLKS…FGNL), 281 to 303 (QLEH…LSQC), 305 to 326 (KLRV…NFTG), 329 to 351 (DLCV…LGHC), 353 to 375 (KMKI…FKNL), 377 to 398 (SLLF…MNVL), 403 to 423 (NLST…NNVT), 427 to 450 (NLAI…LNCK), 451 to 473 (KLEV…IGKM), and 475 to 498 (SLFY…TELK). 3 N-linked (GlcNAc...) asparagine glycosylation sites follow: Asn142, Asn165, and Asn205. Asn251, Asn254, and Asn278 each carry an N-linked (GlcNAc...) asparagine glycan. 2 N-linked (GlcNAc...) asparagine glycosylation sites follow: Asn313 and Asn323. N-linked (GlcNAc...) asparagine glycans are attached at residues Asn385, Asn403, and Asn421. 5 N-linked (GlcNAc...) asparagine glycosylation sites follow: Asn483, Asn504, Asn523, Asn549, and Asn571. LRR repeat units lie at residues 561 to 583 (ELHM…ISGL) and 585 to 606 (NLEV…SFQS). The helical transmembrane segment at 680–700 (IVVLTISLAIGITLLLSVILL) threads the bilayer. Thr751 carries the post-translational modification Phosphothreonine. The Protein kinase domain maps to 754-1025 (FSQANIIGCG…PLIEEVVTWL (272 aa)). ATP is bound by residues 760–768 (IGCGGFGLV) and Lys782. Tyr827 and Tyr867 each carry phosphotyrosine. Asp880 serves as the catalytic Proton acceptor. Residue Tyr922 is modified to Phosphotyrosine. The LRR 20 repeat unit spans residues 995–1020 (RTVLEMLEIACKCIDHEPRRRPLIEE).

The protein belongs to the protein kinase superfamily. Ser/Thr protein kinase family.

Its subcellular location is the cell membrane. It catalyses the reaction L-seryl-[protein] + ATP = O-phospho-L-seryl-[protein] + ADP + H(+). The catalysed reaction is L-threonyl-[protein] + ATP = O-phospho-L-threonyl-[protein] + ADP + H(+). Phytosulfokine receptor with a serine/threonine-protein kinase activity. In Arabidopsis thaliana (Mouse-ear cress), this protein is Phytosulfokine receptor 2 (PSKR2).